We begin with the raw amino-acid sequence, 473 residues long: Siroheme synthase (473 aa).

The segment at 1-203 (MTLFPIFADL…QQPGLAEQEL (203 aa)) is precorrin-2 dehydrogenase /sirohydrochlorin ferrochelatase. NAD(+) is bound by residues 22 to 23 (AV) and 43 to 44 (PR). Residue S128 is modified to Phosphoserine. Residues 216–473 (GSVVLVGAGP…GLPGPQALAA (258 aa)) form a uroporphyrinogen-III C-methyltransferase region. P225 provides a ligand contact to S-adenosyl-L-methionine. The active-site Proton acceptor is the D248. Residue K270 is the Proton donor of the active site. Residues 302 to 304 (GGD), I307, 332 to 333 (TA), M384, and G413 each bind S-adenosyl-L-methionine.

In the N-terminal section; belongs to the precorrin-2 dehydrogenase / sirohydrochlorin ferrochelatase family. The protein in the C-terminal section; belongs to the precorrin methyltransferase family.

The enzyme catalyses uroporphyrinogen III + 2 S-adenosyl-L-methionine = precorrin-2 + 2 S-adenosyl-L-homocysteine + H(+). The catalysed reaction is precorrin-2 + NAD(+) = sirohydrochlorin + NADH + 2 H(+). It catalyses the reaction siroheme + 2 H(+) = sirohydrochlorin + Fe(2+). Its pathway is cofactor biosynthesis; adenosylcobalamin biosynthesis; precorrin-2 from uroporphyrinogen III: step 1/1. It participates in cofactor biosynthesis; adenosylcobalamin biosynthesis; sirohydrochlorin from precorrin-2: step 1/1. The protein operates within porphyrin-containing compound metabolism; siroheme biosynthesis; precorrin-2 from uroporphyrinogen III: step 1/1. It functions in the pathway porphyrin-containing compound metabolism; siroheme biosynthesis; siroheme from sirohydrochlorin: step 1/1. Its pathway is porphyrin-containing compound metabolism; siroheme biosynthesis; sirohydrochlorin from precorrin-2: step 1/1. Multifunctional enzyme that catalyzes the SAM-dependent methylations of uroporphyrinogen III at position C-2 and C-7 to form precorrin-2 via precorrin-1. Then it catalyzes the NAD-dependent ring dehydrogenation of precorrin-2 to yield sirohydrochlorin. Finally, it catalyzes the ferrochelation of sirohydrochlorin to yield siroheme. The protein is Siroheme synthase of Bordetella pertussis (strain Tohama I / ATCC BAA-589 / NCTC 13251).